A 1033-amino-acid chain; its full sequence is SIT4-associating protein SAP190 (1033 aa).

Disordered stretches follow at residues 32-82 (DQDD…TTES), 147-213 (PEII…QVET), 768-813 (FGND…HDSG), and 828-1033 (ENEE…KEAF). Over residues 158–170 (ILIERDRKDKKED) the composition is skewed to basic and acidic residues. Residues 171 to 182 (AEEGGDSEETTN) are compositionally biased toward acidic residues. Basic and acidic residues predominate over residues 183–195 (DSDHDSGDERSVD). A Phosphoserine modification is found at Ser-774. Composition is skewed to acidic residues over residues 784–793 (SEDIIGDTEG) and 828–838 (ENEEDYAEYSD). A phosphoserine mark is found at Ser-857, Ser-862, and Ser-892. Residues 858-879 (DDGKSKSAESEFTDKISEHRDG) are compositionally biased toward basic and acidic residues. Residues 909–924 (SRSQPSDPKLQDQNIF) show a composition bias toward polar residues. The span at 932 to 944 (GVGDDDDYMDPND) shows a compositional bias: acidic residues. The residue at position 990 (Thr-990) is a Phosphothreonine. Ser-991 is modified (phosphoserine). Residues 1000 to 1018 (ISSDEEDSEDEDEENDMGN) show a composition bias toward acidic residues.

The protein belongs to the SAPS family. As to quaternary structure, associates with the SIT4 protein phosphatase catalytic subunit in a cell-cycle-dependent manner. In terms of processing, hyperphosphorylated in the absence of SIT4.

The protein resides in the cytoplasm. In terms of biological role, positive regulator of protein phosphatase SIT4. Involved in the general amino acid control (GAAC) response regulated by TOR. Involved in the dephosphorylation of the elongator complex subunit IKI3. This Saccharomyces cerevisiae (strain AWRI1631) (Baker's yeast) protein is SIT4-associating protein SAP190 (SAP190).